We begin with the raw amino-acid sequence, 290 residues long: Barley B recombinant-like protein C (290 aa).

Disordered regions lie at residues 60-90 (PHHH…YGMM) and 102-183 (QPEP…RKNI). Positions 104 to 116 (EPQPQLQHPPSPP) are enriched in pro residues. The span at 138–158 (PPKKRQQGRQPKVLRPKKPKK) shows a compositional bias: basic residues.

This sequence belongs to the BBR/BPC family.

It localises to the nucleus. Functionally, transcriptional regulator that specifically binds to GA-rich elements (GAGA-repeats) present in regulatory sequences of genes involved in developmental processes. This Oryza sativa subsp. japonica (Rice) protein is Barley B recombinant-like protein C.